A 409-amino-acid chain; its full sequence is Mitochondrial inner membrane protein oxa1-2 (409 aa).

A helical transmembrane segment spans residues 76–96; that stretch reads VVYTPSLPLSSSVLASFSFLP. Residues 97 to 114 are Mitochondrial intermembrane-facing; that stretch reads HNILQNGLNTLHIWSGLP. Residues 115-135 form a helical membrane-spanning segment; the sequence is WWASIAACAVAMRIAVFPIML. Residues 136–188 lie on the Mitochondrial matrix side of the membrane; that stretch reads KMMKTSAKLAIINPKVAEHMSVLSKAKAEGNSELMMQATTQIQNLYKVNNVNP. Residues 189–209 traverse the membrane as a helical segment; that stretch reads LNLLSAPVFQGILFISFFYAL. Topologically, residues 210-235 are mitochondrial intermembrane; sequence KTMAGVPVEGFTDGGFWWVNDLSQPD. The chain crosses the membrane as a helical span at residues 236 to 256; that stretch reads PLHIFPVANGLLMLLNIELGS. At 257–275 the chain is on the mitochondrial matrix side; that stretch reads ETGSNKVAMSPSMKKFFRF. The helical transmembrane segment at 276–296 threads the bilayer; sequence LCLASPLFTMNFPMAIFMYWF. At 297-409 the chain is on the mitochondrial intermembrane side; the sequence is PSNVFSVFQG…SVTKPTEKKD (113 aa). The tract at residues 369-409 is disordered; sequence TDTNNEQKPTNNSTITKATTLSDNSQNDKSSSVTKPTEKKD. The span at 374–403 shows a compositional bias: polar residues; the sequence is EQKPTNNSTITKATTLSDNSQNDKSSSVTK.

It belongs to the OXA1/ALB3/YidC family.

The protein localises to the mitochondrion inner membrane. Required for the insertion of integral membrane proteins into the mitochondrial inner membrane. Essential for the activity and assembly of cytochrome c oxidase. It is essential for viability while oxa101 is not. When both are deleted the cell is non-viable, suggesting that oxa101 act as a back-up for oxa102. The protein is Mitochondrial inner membrane protein oxa1-2 (oxa102) of Schizosaccharomyces pombe (strain 972 / ATCC 24843) (Fission yeast).